The sequence spans 430 residues: Dye-decolorizing peroxidase Tfu_3078 (430 aa).

Positions 1–39 form a signal peptide, tat-type signal; it reads MTEPDTERKGSSRRGFLAGLGAAALTGAGIGMAAGEVLR. The segment at 42–75 is disordered; sequence LPDSDPAASPEAEQRLRMAAQRADATAAPQPGIS. A compositionally biased stretch (low complexity) spans 60–69; sequence AAQRADATAA. Aspartate 242 functions as the Proton acceptor in the catalytic mechanism. Histidine 338 contacts heme.

Belongs to the DyP-type peroxidase family. As to quaternary structure, monomer. It depends on heme b as a cofactor. Exported by the Tat system. The position of the signal peptide cleavage has not been experimentally proven.

The protein resides in the secreted. It catalyses the reaction Reactive Blue 5 + 2 H2O2 = 2,2'-disulfonyl azobenzene + 3-[(4-amino-6-chloro-1,3,5-triazin-2-yl)amino]benzenesulfonate + phthalate + 2 H2O + 2 H(+). Functionally, peroxidase that is able to convert a large number of compounds, but its physiological substrate is not known. Shows high reactivity towards anthraquinone dyes (e.g. Reactive Blue 19) and a modest activity towards standard peroxidase substrates (such as guaiacol and 2,6-dimethoxyphenol) and azo dyes (e.g. Reactive Blue 5). Is also able to oxidize aromatic sulfides enantioselectively, resulting in the corresponding (R)-sulfoxides, but with a poor efficiency. Does not display catalase activity. The polypeptide is Dye-decolorizing peroxidase Tfu_3078 (Thermobifida fusca (strain YX)).